Reading from the N-terminus, the 335-residue chain is DNA-directed RNA polymerase subunit alpha (335 aa).

The interval 1-233 is alpha N-terminal domain (alpha-NTD); it reads MTRTANEFLT…QQIAIFVDLQ (233 aa). Residues 247–335 are alpha C-terminal domain (alpha-CTD); sequence VDPILLRPVD…MDDRFAYRSR (89 aa).

This sequence belongs to the RNA polymerase alpha chain family. Homodimer. The RNAP catalytic core consists of 2 alpha, 1 beta, 1 beta' and 1 omega subunit. When a sigma factor is associated with the core the holoenzyme is formed, which can initiate transcription.

The catalysed reaction is RNA(n) + a ribonucleoside 5'-triphosphate = RNA(n+1) + diphosphate. In terms of biological role, DNA-dependent RNA polymerase catalyzes the transcription of DNA into RNA using the four ribonucleoside triphosphates as substrates. The chain is DNA-directed RNA polymerase subunit alpha from Acinetobacter baylyi (strain ATCC 33305 / BD413 / ADP1).